Consider the following 518-residue polypeptide: Protein translocase subunit SecD (518 aa).

6 helical membrane-spanning segments follow: residues I9 to Q29, L361 to F381, I384 to L404, L406 to I426, F452 to V474, and I486 to W506.

This sequence belongs to the SecD/SecF family. SecD subfamily. In terms of assembly, forms a complex with SecF. Part of the essential Sec protein translocation apparatus which comprises SecA, SecYEG and auxiliary proteins SecDF-YajC and YidC.

It localises to the cell inner membrane. Part of the Sec protein translocase complex. Interacts with the SecYEG preprotein conducting channel. SecDF uses the proton motive force (PMF) to complete protein translocation after the ATP-dependent function of SecA. The polypeptide is Protein translocase subunit SecD (Rickettsia conorii (strain ATCC VR-613 / Malish 7)).